Consider the following 848-residue polypeptide: Protein MEI2-like 2 (848 aa).

RRM domains are found at residues Arg197–Pro270 and Gly282–Pro355. Disordered stretches follow at residues Ile370 to Ser400, Asn455 to Gln523, and Ala826 to Leu848.

Its function is as follows. Probable RNA-binding protein that may play a role in growth regulation. This chain is Protein MEI2-like 2 (ML2), found in Oryza sativa subsp. japonica (Rice).